A 311-amino-acid chain; its full sequence is Vomeronasal type-1 receptor 105 (311 aa).

The Extracellular portion of the chain corresponds to 1 to 17 (MMNKNSRLYTDSNIRNT). The chain crosses the membrane as a helical span at residues 18-38 (FFAEIGIGVSANSLLLLFNIF). At 39–50 (KLICGQRSRLTD) the chain is on the cytoplasmic side. The helical transmembrane segment at 51–71 (LPIGLLSLINLLMLLMTAFIA) threads the bilayer. At 72 to 94 (TDTFISWRGWDDIICKSLLYLYR) the chain is on the extracellular side. An intrachain disulfide couples Cys86 to Cys173. Residues 95–115 (TFRGLSLCTSCLLSVLQAIIL) form a helical membrane-spanning segment. At 116 to 135 (SPRSSCLAKFKHKPSHHISC) the chain is on the cytoplasmic side. Residues 136-156 (AILSLSVLYMFISSHLLVSII) form a helical membrane-spanning segment. Over 157–188 (ATPNLTTNDFIHVTQWCSILPMSYLMQSMFST) the chain is Extracellular. Asn160 carries N-linked (GlcNAc...) asparagine glycosylation. A helical transmembrane segment spans residues 189 to 209 (LLAIRDVFLISLMVLSTWYMV). Topologically, residues 210–239 (ALLCRHRKQTRHLQGTSLSPKASPEQRATR) are cytoplasmic. A helical transmembrane segment spans residues 240–260 (SILMLMSLFVLMSVFDSIVCS). The Extracellular portion of the chain corresponds to 261 to 271 (SRTMYLNDPIS). Residues 272–292 (YSYQLFMVHIYATVSPFVFIV) form a helical membrane-spanning segment. Over 293 to 311 (TEKHIVNSLRSMCVKVMNV) the chain is Cytoplasmic.

Belongs to the G-protein coupled receptor 1 family. Expressed in 1-4% of neurons of the vomeronasal organ. Only one pheromone receptor gene may be expressed in a particular neuron. Not expressed in the main olfactory epithelium.

The protein localises to the cell membrane. Functionally, putative pheromone receptor implicated in the regulation of social as well as reproductive behavior. This is Vomeronasal type-1 receptor 105 (Vom1r105) from Rattus norvegicus (Rat).